Here is a 704-residue protein sequence, read N- to C-terminus: DNA ligase (704 aa).

NAD(+) is bound by residues 43–47 (DADYD), 92–93 (SL), and Glu124. The active-site N6-AMP-lysine intermediate is the Lys126. Positions 147, 182, 298, and 322 each coordinate NAD(+). Residues Cys427, Cys430, Cys445, and Cys451 each contribute to the Zn(2+) site. The BRCT domain occupies 625 to 704 (PVASPVAGRI…DGWLRLIGDA (80 aa)).

This sequence belongs to the NAD-dependent DNA ligase family. LigA subfamily. Mg(2+) is required as a cofactor. It depends on Mn(2+) as a cofactor.

It catalyses the reaction NAD(+) + (deoxyribonucleotide)n-3'-hydroxyl + 5'-phospho-(deoxyribonucleotide)m = (deoxyribonucleotide)n+m + AMP + beta-nicotinamide D-nucleotide.. Its function is as follows. DNA ligase that catalyzes the formation of phosphodiester linkages between 5'-phosphoryl and 3'-hydroxyl groups in double-stranded DNA using NAD as a coenzyme and as the energy source for the reaction. It is essential for DNA replication and repair of damaged DNA. The sequence is that of DNA ligase from Cereibacter sphaeroides (strain KD131 / KCTC 12085) (Rhodobacter sphaeroides).